The following is a 180-amino-acid chain: Signal peptidase complex subunit 2 (180 aa).

Over 1 to 45 the chain is Cytoplasmic; the sequence is MTDEPVKVVNKWDGPTVKNALDEVVKKILNDKVGWTESHNLMNLR. Residues 46 to 66 traverse the membrane as a helical segment; it reads LLISFIGVAFSAFACGYDYYE. The Lumenal segment spans residues 67 to 72; the sequence is PFPKSK. Residues 73 to 93 traverse the membrane as a helical segment; the sequence is IVLAVCSVSYFICMGILQMYQ. The Cytoplasmic segment spans residues 94-180; the sequence is WYVEKDCIYE…LYNRLIRSEQ (87 aa).

The protein belongs to the SPCS2 family. Component of the signal peptidase complex (SPC) composed of a catalytic subunit sec-11 and three accessory subunits spcs-1, spcs-2 and spcs-3. The complex induces a local thinning of the ER membrane which is used to measure the length of the signal peptide (SP) h-region of protein substrates. This ensures the selectivity of the complex towards h-regions shorter than 18-20 amino acids.

Its subcellular location is the endoplasmic reticulum membrane. Its function is as follows. Component of the signal peptidase complex (SPC) which catalyzes the cleavage of N-terminal signal sequences from nascent proteins as they are translocated into the lumen of the endoplasmic reticulum. Enhances the enzymatic activity of SPC and facilitates the interactions between different components of the translocation site. This Caenorhabditis elegans protein is Signal peptidase complex subunit 2.